The chain runs to 274 residues: NH(3)-dependent NAD(+) synthetase (274 aa).

Residue 27–34 (GLSGGIDS) participates in ATP binding. Asp-33 contributes to the Mg(2+) binding site. A deamido-NAD(+)-binding site is contributed by Arg-121. ATP is bound at residue Thr-141. Residue Glu-146 coordinates Mg(2+). 2 residues coordinate ATP: Lys-170 and Ser-192.

It belongs to the NAD synthetase family. In terms of assembly, homodimer.

It catalyses the reaction deamido-NAD(+) + NH4(+) + ATP = AMP + diphosphate + NAD(+) + H(+). The protein operates within cofactor biosynthesis; NAD(+) biosynthesis; NAD(+) from deamido-NAD(+) (ammonia route): step 1/1. Catalyzes the ATP-dependent amidation of deamido-NAD to form NAD. Uses ammonia as a nitrogen source. The chain is NH(3)-dependent NAD(+) synthetase from Helicobacter hepaticus (strain ATCC 51449 / 3B1).